The primary structure comprises 449 residues: Capsid protein (449 aa).

The DNA-binding stretch occupies residues 1 to 43 (MERRARRPRGRFYAFRRGRWNHLKRLRRRYKFRHRRRQRYRRR). Positions 6 to 47 (RRPRGRFYAFRRGRWNHLKRLRRRYKFRHRRRQRYRRRAFRK) are nuclear localization signals.

Belongs to the gyrovirus capsid protein family. As to quaternary structure, homomultimer (Potential). Interacts with Rep; this interaction relocates Rep into the nucleus.

The protein localises to the host nucleus. It is found in the virion. Functionally, self-assembles to form the virion icosahedral capsid with a T=1 symmetry. This very small capsid (25 nm in diameter) allows the virus to be very stable in the environment and resistant to some disinfectants, including detergents. Essential for the initial attachment to host receptors. After attachment, the virus is endocytosed and traffics to the nucleus. The capsid protein binds and transports the viral genome and Rep across the nuclear envelope. The polypeptide is Capsid protein (VP1) (Chicken anemia virus (isolate Japan 82-2) (CAV)).